The sequence spans 261 residues: Carbonic anhydrase 1 (261 aa).

The interval Met-1–Pro-31 is disordered. Ala-2 bears the N-acetylalanine mark. Positions Pro-4 to Phe-261 constitute an Alpha-carbonic anhydrase domain. The active-site Proton donor/acceptor is the His-65. The Zn(2+) site is built by His-95, His-97, and His-120. Residues Thr-200 and Thr-200–His-201 each bind substrate. The tract at residues Val-240–Phe-261 is disordered.

It belongs to the alpha-carbonic anhydrase family. The cofactor is Zn(2+).

It is found in the cytoplasm. It carries out the reaction hydrogencarbonate + H(+) = CO2 + H2O. The enzyme catalyses urea = cyanamide + H2O. With respect to regulation, inhibited by acetazolamide. Functionally, catalyzes the reversible hydration of carbon dioxide. Can hydrate cyanamide to urea. The protein is Carbonic anhydrase 1 (CA1) of Gorilla gorilla gorilla (Western lowland gorilla).